A 220-amino-acid polypeptide reads, in one-letter code: Heptaprenyl diphosphate synthase component 1 (220 aa).

As to quaternary structure, heterodimer of component I and II.

It catalyses the reaction 4 isopentenyl diphosphate + (2E,6E)-farnesyl diphosphate = all-trans-heptaprenyl diphosphate + 4 diphosphate. In terms of biological role, supplies heptaprenyl diphosphate, the precursor for the side chain of the isoprenoid quinone menaquinone-7 (MQ-7). In Geobacillus stearothermophilus (Bacillus stearothermophilus), this protein is Heptaprenyl diphosphate synthase component 1 (hepS).